The sequence spans 462 residues: Fumarate hydratase class II (462 aa).

Residues 97–99, 128–131, 138–140, and threonine 186 contribute to the substrate site; these read SGT, HPND, and STN. Histidine 187 (proton donor/acceptor) is an active-site residue. The active site involves serine 317. Residues serine 318 and 323-325 each bind substrate; that span reads KVN.

This sequence belongs to the class-II fumarase/aspartase family. Fumarase subfamily. As to quaternary structure, homotetramer.

Its subcellular location is the cytoplasm. The catalysed reaction is (S)-malate = fumarate + H2O. It participates in carbohydrate metabolism; tricarboxylic acid cycle; (S)-malate from fumarate: step 1/1. Functionally, involved in the TCA cycle. Catalyzes the stereospecific interconversion of fumarate to L-malate. This chain is Fumarate hydratase class II, found in Neisseria meningitidis serogroup A / serotype 4A (strain DSM 15465 / Z2491).